The sequence spans 304 residues: Vacuolar protein sorting-associated protein 26C (304 aa).

Belongs to the VPS26 family. As to quaternary structure, component of the commander complex that is essential for endosomal recycling of transmembrane cargos; the commander complex is composed of the CCC subcomplex and the retriever subcomplex. Component of the heterotrimeric retriever complex consisting of vps26c, vps29 and vps35l; within the complex interacts with vps35l. Interacts with snx17 (via C-terminus); the interaction is direct and associates snx17 with the retriever complex. Interacts with snx31; the interaction is direct.

It is found in the endosome. Component of the commander complex that is essential for endosomal recycling of transmembrane cargos; the commander complex is composed of the CCC subcomplex and the retriever subcomplex. Component of the retriever complex, which is a heterotrimeric complex related to retromer cargo-selective complex (CSC) and essential for retromer-independent retrieval and recycling of numerous cargos such as integrin alpha-5/beta-1 (ITGA5:ITGB1). The recruitment of the retriever complex to the endosomal membrane involves CCC and WASH complexes. In the endosomes, drives the retriever and recycling of NxxY-motif-containing cargo proteins by coupling to snx17, a cargo essential for the homeostatic maintenance of numerous cell surface proteins associated with processes that include cell migration, cell adhesion, nutrient supply and cell signaling. The chain is Vacuolar protein sorting-associated protein 26C (vps26c) from Dictyostelium discoideum (Social amoeba).